The following is a 717-amino-acid chain: Transport/processing ATP-binding protein ComA (717 aa).

The Peptidase C39 domain occupies 11–138 (QVDQMDCGVA…EEWTGVTLFM (128 aa)). Cys17 is an active-site residue. The next 6 helical transmembrane spans lie at 166 to 186 (GLIANIVLATLLVTVINIVGS), 205 to 225 (LGIISIGLVIVYIFQQILSYA), 237 to 257 (LSIDVILSYIKHVFHLPMSFF), 282 to 302 (TILSIFLDVSTVVIISLVLFS), 306 to 326 (NLFFMTLLALPIYTVIIFAFM), and 397 to 417 (VAHLLLNVGILWMGAVLVMDG). Residues 168 to 450 (IANIVLATLL…IINLQTKLQT (283 aa)) form the ABC transmembrane type-1 domain. The 234-residue stretch at 484-717 (MTFKQVHYKY…GGFYAHLVNS (234 aa)) folds into the ABC transporter domain. 517–524 (GISGSGKT) contacts ATP.

The protein belongs to the ABC transporter superfamily. Competence factor exporter (TC 3.A.1.112.1) family.

It is found in the cell membrane. Required for induction of competence. Seems to transport the competence-stimulating peptide (CSP). The protein is Transport/processing ATP-binding protein ComA (comA) of Streptococcus pneumoniae serotype 4 (strain ATCC BAA-334 / TIGR4).